The following is a 481-amino-acid chain: Fibrinogen beta chain (481 aa).

A signal peptide spans 1–19; sequence MRHLWLLLLLCVFSVQTQA. Positions 22-81 are disordered; it reads DDYDEPTDSLDARGHRPVDRRKEEPPSLRPAPPPISGGGYRARPAKATANQKKVERRPPD. Positions 31-47 are enriched in basic and acidic residues; sequence LDARGHRPVDRRKEEPP. Residues 35 to 37 are beta-chain polymerization, binding distal domain of another fibrin; sequence GHR. A coiled-coil region spans residues 149 to 213; the sequence is QAQVKENENV…SDISAQMEYC (65 aa). 2 disulfide bridges follow: Cys221-Cys306 and Cys231-Cys260. One can recognise a Fibrinogen C-terminal domain in the interval 222–478; that stretch reads NIPVVSGKEC…RMSMKIRPFF (257 aa). A glycan (N-linked (GlcNAc...) asparagine) is linked at Asn384. The cysteines at positions 414 and 427 are disulfide-linked.

As to quaternary structure, heterohexamer; disulfide linked. Contains 2 sets of 3 non-identical chains (alpha, beta and gamma). The 2 heterotrimers are in head to head conformation with the N-termini in a small central domain. Post-translationally, conversion of fibrinogen to fibrin is triggered by thrombin, which cleaves fibrinopeptides A and B from alpha and beta chains, and thus exposes the N-terminal polymerization sites responsible for the formation of the soft clot.

The protein resides in the secreted. Its function is as follows. Cleaved by the protease thrombin to yield monomers which, together with fibrinogen alpha (FGA) and fibrinogen gamma (FGG), polymerize to form an insoluble fibrin matrix. Fibrin has a major function in hemostasis as one of the primary components of blood clots. In addition, functions during the early stages of wound repair to stabilize the lesion and guide cell migration during re-epithelialization. Was originally thought to be essential for platelet aggregation, based on in vitro studies using anticoagulated blood. However, subsequent studies have shown that it is not absolutely required for thrombus formation in vivo. Enhances expression of SELP in activated platelets via an ITGB3-dependent pathway. Maternal fibrinogen is essential for successful pregnancy. Fibrin deposition is also associated with infection, where it protects against IFNG-mediated hemorrhage. May also facilitate the immune response via both innate and T-cell mediated pathways. In Mus musculus (Mouse), this protein is Fibrinogen beta chain (Fgb).